Here is a 222-residue protein sequence, read N- to C-terminus: LHFPL tetraspan subfamily member 3 protein (222 aa).

4 helical membrane passes run 22–42 (IGVL…VCFI), 96–116 (FFIG…TLFF), 126–146 (ICAW…MIFP), and 177–197 (ILAI…VVLG).

The protein belongs to the LHFP family. In terms of tissue distribution, brain-specific.

The protein localises to the membrane. In Mus musculus (Mouse), this protein is LHFPL tetraspan subfamily member 3 protein.